The chain runs to 98 residues: NADH-ubiquinone oxidoreductase chain 4L (98 aa).

3 consecutive transmembrane segments (helical) span residues Met1–Ile21, Leu30–Ile50, and Ile61–Ile81.

It belongs to the complex I subunit 4L family. Core subunit of respiratory chain NADH dehydrogenase (Complex I) which is composed of 45 different subunits.

It is found in the mitochondrion inner membrane. The enzyme catalyses a ubiquinone + NADH + 5 H(+)(in) = a ubiquinol + NAD(+) + 4 H(+)(out). Its function is as follows. Core subunit of the mitochondrial membrane respiratory chain NADH dehydrogenase (Complex I) which catalyzes electron transfer from NADH through the respiratory chain, using ubiquinone as an electron acceptor. Part of the enzyme membrane arm which is embedded in the lipid bilayer and involved in proton translocation. The polypeptide is NADH-ubiquinone oxidoreductase chain 4L (MT-ND4L) (Neovison vison (American mink)).